Consider the following 293-residue polypeptide: Nucleotide-binding protein Bcer98_3698 (293 aa).

14-21 contributes to the ATP binding site; that stretch reads GMSGAGKT. 65 to 68 provides a ligand contact to GTP; the sequence is DLRG.

It belongs to the RapZ-like family.

Functionally, displays ATPase and GTPase activities. The polypeptide is Nucleotide-binding protein Bcer98_3698 (Bacillus cytotoxicus (strain DSM 22905 / CIP 110041 / 391-98 / NVH 391-98)).